We begin with the raw amino-acid sequence, 380 residues long: Elongation factor Ts, mitochondrial (380 aa).

The protein belongs to the EF-Ts family.

Its subcellular location is the mitochondrion. In terms of biological role, associates with the EF-Tu.GDP complex and induces the exchange of GDP to GTP. It remains bound to the aminoacyl-tRNA.EF-Tu.GTP complex up to the GTP hydrolysis stage on the ribosome. The protein is Elongation factor Ts, mitochondrial of Plasmodium chabaudi chabaudi.